A 61-amino-acid chain; its full sequence is Large ribosomal subunit protein bL32 (61 aa).

The protein belongs to the bacterial ribosomal protein bL32 family.

In Ehrlichia chaffeensis (strain ATCC CRL-10679 / Arkansas), this protein is Large ribosomal subunit protein bL32.